Consider the following 350-residue polypeptide: Ketol-acid reductoisomerase (NADP(+)) 2 (350 aa).

The KARI N-terminal Rossmann domain maps to 3–183 (ATIWYEKDAD…GALRAGAIKT (181 aa)). NADP(+)-binding positions include 26 to 29 (YGSQ), Arg49, Ser52, Ser54, and 84 to 87 (DQYQ). The active site involves His109. Gly135 lines the NADP(+) pocket. The 144-residue stretch at 184 to 327 (TFTEETETDL…PKLRAMFSWN (144 aa)) folds into the KARI C-terminal knotted domain. Positions 192, 196, 228, and 232 each coordinate Mg(2+). Ser253 is a substrate binding site. The tract at residues 331–350 (AKDKDETESFNGKIARTQVQ) is disordered.

It belongs to the ketol-acid reductoisomerase family. Requires Mg(2+) as cofactor.

The enzyme catalyses (2R)-2,3-dihydroxy-3-methylbutanoate + NADP(+) = (2S)-2-acetolactate + NADPH + H(+). The catalysed reaction is (2R,3R)-2,3-dihydroxy-3-methylpentanoate + NADP(+) = (S)-2-ethyl-2-hydroxy-3-oxobutanoate + NADPH + H(+). It functions in the pathway amino-acid biosynthesis; L-isoleucine biosynthesis; L-isoleucine from 2-oxobutanoate: step 2/4. The protein operates within amino-acid biosynthesis; L-valine biosynthesis; L-valine from pyruvate: step 2/4. Its function is as follows. Involved in the biosynthesis of branched-chain amino acids (BCAA). Catalyzes an alkyl-migration followed by a ketol-acid reduction of (S)-2-acetolactate (S2AL) to yield (R)-2,3-dihydroxy-isovalerate. In the isomerase reaction, S2AL is rearranged via a Mg-dependent methyl migration to produce 3-hydroxy-3-methyl-2-ketobutyrate (HMKB). In the reductase reaction, this 2-ketoacid undergoes a metal-dependent reduction by NADPH to yield (R)-2,3-dihydroxy-isovalerate. The chain is Ketol-acid reductoisomerase (NADP(+)) 2 from Bifidobacterium longum (strain NCC 2705).